The sequence spans 153 residues: Phosphatase NudJ (153 aa).

Residues 3–131 (KPHVTVACVV…LVAESIRCYQ (129 aa)) enclose the Nudix hydrolase domain. The short motif at 36–57 (GHLEADETLVEAAARELWEETG) is the Nudix box element.

The protein belongs to the Nudix hydrolase family. NudJ subfamily. Monomer. Mg(2+) serves as cofactor.

This is Phosphatase NudJ (nudJ) from Escherichia coli O139:H28 (strain E24377A / ETEC).